We begin with the raw amino-acid sequence, 444 residues long: 23S rRNA (uracil(1939)-C(5))-methyltransferase RlmD (444 aa).

Residues 5–67 (RSRIDRTPFQ…RHFDEARTVE (63 aa)) enclose the TRAM domain. Residues cysteine 80, cysteine 86, cysteine 89, and cysteine 168 each contribute to the [4Fe-4S] cluster site. S-adenosyl-L-methionine-binding residues include glutamine 276, phenylalanine 305, asparagine 310, glutamate 326, aspartate 353, and aspartate 374. The active-site Nucleophile is the cysteine 400.

It belongs to the class I-like SAM-binding methyltransferase superfamily. RNA M5U methyltransferase family. RlmD subfamily.

The catalysed reaction is uridine(1939) in 23S rRNA + S-adenosyl-L-methionine = 5-methyluridine(1939) in 23S rRNA + S-adenosyl-L-homocysteine + H(+). Its function is as follows. Catalyzes the formation of 5-methyl-uridine at position 1939 (m5U1939) in 23S rRNA. This Stenotrophomonas maltophilia (strain K279a) protein is 23S rRNA (uracil(1939)-C(5))-methyltransferase RlmD.